A 555-amino-acid chain; its full sequence is MFGDTSEVLPVAEGKGSSWPTQRLTMTVAFADGDRTWSFDLFSKLAGLALLSFAALFIQRRLFHPLRKYPGPWLNSLSEIPAAIALASGRQQAYYRRLHSRYATSSGTIVRVAPNELSFVDPNAWQDIYNRKPPHMEKHPVFIGAVAKVGGAVGISMAPLATKDHSRHRRALGYSFATSALVEQQEIILKQVRNLISHLKVFARKEKAIDMTDWYTYTTFDLMGDLVFGQPFGCLDGEGPTEWSRAIIHVFVSGAWEQAIRRVAGVNTWAESVLKKILIPKKVALWRRLHFAKSRETTLKRIKDGQRNHKDLMYFLLKNKEARQNLSDLEIMINMVLLVSAGSETTASTLTAWTYFVCTNRSVHRRLLKEIRGNFKTAEHIVWENTQPDQLPYLEATIHEALRLVPPPASSQQRVVPPGGAVICGERIPEGYAVAVPPVAVTHLDINFADPTGFHPERWLPRDDDDWDEKFAKDKLGASQPFSLGPRACLGKTLAYFELRLILASVLWNFDIDLAHAKETKDLWTMEDDMKYLKGYLTWVKPPLPVRLQEVKREA.

Transmembrane regions (helical) follow at residues 38–58 and 141–161; these read SFDL…ALFI and VFIG…APLA. Asn-325 and Asn-360 each carry an N-linked (GlcNAc...) asparagine glycan. Cys-489 serves as a coordination point for heme.

It belongs to the cytochrome P450 family. Heme serves as cofactor.

It is found in the membrane. It functions in the pathway hormone biosynthesis. In terms of biological role, cytochrome P450 monooxygenase; part of the gene cluster that mediates the biosynthesis of abscisic acid (ABA), a phytohormone that acts antagonistically toward salicylic acid (SA), jasmonic acid (JA) and ethylene (ETH) signaling, to impede plant defense responses. The first step of the pathway catalyzes the reaction from farnesyl diphosphate to alpha-ionylideneethane performed by the alpha-ionylideneethane synthase abl3 via a three-step reaction mechanism involving 2 neutral intermediates, beta-farnesene and allofarnesene. The cytochrome P450 monooxygenase abl1 might then be involved in the conversion of alpha-ionylideneethane to alpha-ionylideneacetic acid. Alpha-ionylideneacetic acid is further converted to abscisic acid in 2 steps involving the cytochrome P450 monooxygenase abl2 and the short-chain dehydrogenase/reductase abl4, via the intermediates 1'-deoxy-ABA or 1',4'-trans-diol-ABA, depending on the order of action of these 2 enzymes. Abl2 is responsible for the hydroxylation of carbon atom C-1' and abl4 might be involved in the oxidation of the C-4' carbon atom. This Leptosphaeria maculans (strain JN3 / isolate v23.1.3 / race Av1-4-5-6-7-8) (Blackleg fungus) protein is Cytochrome P450 monooxygenase abl2.